Consider the following 996-residue polypeptide: MGRPELGALRPLALLLLLLLQLQHLSAADPLPGGQGPVKECEEDQFRCRNERCIPLVWRCDEDNDCSDNSDEDDCPKRTCADSDFTCDNGHCIPERWKCDGEEECPDGSDESKATCSSEECPAEKLSCGPTSHKCVPASWRCDGEKDCEGGADEAGCPTLCAPHEFQCSNRSCLASVFVCDGDDDCGDGSDERGCSDPACPPREFRCGGGGTCIPERWVCDRQFDCEDRSDEAAELCGRAGQGTTATPAACAPTAQFTCRSGECIHLGWRCDGDRDCKDKSDEADCSPGPCRENEFQCGDGTCVLAIKRCNQERDCPDGSDEAGCLQESTCEGPRRFQCKSGECVDGGKVCDDQRDCRDWSDEPQKVCGLNECLHNNGGCSHICTDLKIGFECTCPAGFQLLDQKTCGDIDECQDPDACSQICVNYKGYFKCECHPGYEMDTLTKNCKAVAGKSPSLIFTNRHEVRRIDLVKRDYSRLIPMLKNVVALDVEVATNRIYWCDLSYRKIYSAHMDKASIPDEQVVLIDEQLHSPEGLAVDWVHKHIYWTDSGNKTISVATTDGRRRCTLFSRELSEPRAIAVDPLRGFMYWSDWGFQAKIEKAGLNGADRQTLVSDNIEWPNGITLDLLSQRLYWVDSKLHQLSSIDFNGGNRKMLIFSTDFLSHPFGVAVFEDKVFWTDLENEAIFSANRLNGLEIAILAENLNNPHDIVIFHELKQPKAADACDLSAQPNGGCEYLCLPAPQISSHSPKYTCACPDTMWLGPDMKRCYRAPQSTSTTTLASAMTRTVPATTRAPGTTIHDPTYQNHSTETPSQTAAAPHSVNVPRAPSTSPSTPSPATSNHSQHYGNEGSQMGSTVTAAVIGVIVPIVVIALLCMSGYLIWRNWKRKNTKSMNFDNPVYRKTTEEEEEDELHIGRTAQIGHVYPAAISNYDRPLWAEPCLGETRDLEDPAPALKELFVLPGEPRSQLHQLPKNPLSELPVVKCKRVALSLEDDGLP.

An N-terminal signal peptide occupies residues 1–28 (MGRPELGALRPLALLLLLLLQLQHLSAA). Residues 29–858 (DPLPGGQGPV…GSQMGSTVTA (830 aa)) are Extracellular-facing. 8 LDL-receptor class A domains span residues 40 to 76 (ECEEDQFRCRNERCIPLVWRCDEDNDCSDNSDEDDCP), 79 to 117 (TCADSDFTCDNGHCIPERWKCDGEEECPDGSDESKATCS), 120 to 158 (ECPAEKLSCGPTSHKCVPASWRCDGEKDCEGGADEAGCP), 160 to 196 (LCAPHEFQCSNRSCLASVFVCDGDDDCGDGSDERGCS), 199 to 238 (ACPPREFRCGGGGTCIPERWVCDRQFDCEDRSDEAAELCG), 250 to 287 (ACAPTAQFTCRSGECIHLGWRCDGDRDCKDKSDEADCS), 290 to 326 (PCRENEFQCGDGTCVLAIKRCNQERDCPDGSDEAGCL), and 330 to 369 (TCEGPRRFQCKSGECVDGGKVCDDQRDCRDWSDEPQKVCG). Disulfide bonds link Cys-41–Cys-53, Cys-48–Cys-66, Cys-60–Cys-75, Cys-80–Cys-92, Cys-87–Cys-105, Cys-99–Cys-116, Cys-121–Cys-135, Cys-128–Cys-148, Cys-142–Cys-157, Cys-161–Cys-173, Cys-168–Cys-186, Cys-180–Cys-195, Cys-200–Cys-213, Cys-207–Cys-226, Cys-220–Cys-237, Cys-251–Cys-264, Cys-259–Cys-277, Cys-271–Cys-286, Cys-291–Cys-303, Cys-298–Cys-316, Cys-310–Cys-325, Cys-331–Cys-344, Cys-339–Cys-357, Cys-351–Cys-368, Cys-373–Cys-384, Cys-380–Cys-393, Cys-395–Cys-407, Cys-413–Cys-423, Cys-419–Cys-432, and Cys-434–Cys-447. Positions 58, 61, 63, 65, 71, and 72 each coordinate Ca(2+). Asn-170 carries N-linked (GlcNAc...) asparagine glycosylation. Residues 364-408 (PQKVCGLNECLHNNGGCSHICTDLKIGFECTCPAGFQLLDQKTCG) form the EGF-like 1 domain. The region spanning 409–448 (DIDECQDPDACSQICVNYKGYFKCECHPGYEMDTLTKNCK) is the EGF-like 2; calcium-binding domain. 5 LDL-receptor class B repeats span residues 495–541 (NRIY…DWVH), 542–584 (KHIY…DPLR), 585–628 (GFMY…DLLS), 629–671 (QRLY…AVFE), and 672–714 (DKVF…FHEL). N-linked (GlcNAc...) asparagine glycosylation occurs at Asn-551. Residues 773–831 (STSTTTLASAMTRTVPATTRAPGTTIHDPTYQNHSTETPSQTAAAPHSVNVPRAPSTSP) form a clustered O-linked oligosaccharides region. The interval 778–851 (TLASAMTRTV…SQHYGNEGSQ (74 aa)) is disordered. Residues 802–815 (TYQNHSTETPSQTA) are compositionally biased toward polar residues. Asn-805 is a glycosylation site (N-linked (GlcNAc...) asparagine). Low complexity predominate over residues 824–839 (PRAPSTSPSTPSPATS). The N-linked (GlcNAc...) asparagine glycan is linked to Asn-840. The span at 840-851 (NHSQHYGNEGSQ) shows a compositional bias: polar residues. A helical membrane pass occupies residues 859-881 (AVIGVIVPIVVIALLCMSGYLIW). The Cytoplasmic segment spans residues 882–996 (RNWKRKNTKS…ALSLEDDGLP (115 aa)).

The protein belongs to the LDLR family. Homooligomer. Interacts with VLDLR. Reelin associates with two or more receptor molecules. Interacts with DAB1 and JNK-interacting proteins. Interacts with SNX17. Interacts with PCSK9. Interacts with MDK; this interaction is calcium dependent. Interacts with CLU. In terms of processing, O-glycosylated. Some alternatively spliced isoforms lack the O-linked sugar domain. Undergoes sequential, furin and gamma-secretase dependent, proteolytic processing, resulting in the extracellular release of the entire ligand-binding domain as a soluble polypeptide and in the intracellular domain (ICD) release into the cytoplasm. The gamma-secretase-dependent proteolytical processing occurs after the bulk of the extracellular domain has been shed, in a furin-dependent manner, in alternatively spliced isoforms carrying the furin cleavage site. Hypoglycosylation (mainly hypo-O-glycosylation) leads to increased extracellular cleavage, which in turn results in accelerating release of the intracellular domain (ICD) by the gamma-secretase. The resulting receptor fragment is able to inhibit Reelin signaling and in particular the Reelin-induced DAB1 phosphorylation. Post-translationally, tyrosine phosphorylated upon apoE binding. In terms of processing, ubiquitinated by MYLIP leading to degradation. As to expression, expressed in neurons throughout the brain, with strong expression in pyramidal neurons of the hippocampus, granule cells of the dentate gyrus, cortical neurons and Purkinje cells of the cerebellum. Also expressed in the epithelium of the choroid plexus and of the blood vessels (apical expression), as well as in the epididymis.

Its subcellular location is the cell membrane. It is found in the secreted. Its function is as follows. Cell surface receptor for Reelin (RELN) and apolipoprotein E (apoE)-containing ligands. LRP8 participates in transmitting the extracellular Reelin signal to intracellular signaling processes, by binding to DAB1 on its cytoplasmic tail. Reelin acts via both the VLDL receptor (VLDLR) and LRP8 to regulate DAB1 tyrosine phosphorylation and microtubule function in neurons. LRP8 has higher affinity for Reelin than VLDLR. LRP8 is thus a key component of the Reelin pathway which governs neuronal layering of the forebrain during embryonic brain development. Binds the endoplasmic reticulum resident receptor-associated protein (RAP). Binds dimers of beta 2-glycoprotein I and may be involved in the suppression of platelet aggregation in the vasculature. Highly expressed in the initial segment of the epididymis, where it affects the functional expression of clusterin and phospholipid hydroperoxide glutathione peroxidase (PHGPx), two proteins required for sperm maturation. May also function as an endocytic receptor. Not required for endocytic uptake of SEPP1 in the kidney which is mediated by LRP2. Together with its ligand, apolipoprotein E (apoE), may indirectly play a role in the suppression of the innate immune response by controlling the survival of myeloid-derived suppressor cells. In Mus musculus (Mouse), this protein is Low-density lipoprotein receptor-related protein 8 (Lrp8).